A 568-amino-acid polypeptide reads, in one-letter code: Proline--tRNA ligase (568 aa).

The protein belongs to the class-II aminoacyl-tRNA synthetase family. ProS type 1 subfamily. As to quaternary structure, homodimer.

The protein localises to the cytoplasm. It carries out the reaction tRNA(Pro) + L-proline + ATP = L-prolyl-tRNA(Pro) + AMP + diphosphate. Its function is as follows. Catalyzes the attachment of proline to tRNA(Pro) in a two-step reaction: proline is first activated by ATP to form Pro-AMP and then transferred to the acceptor end of tRNA(Pro). As ProRS can inadvertently accommodate and process non-cognate amino acids such as alanine and cysteine, to avoid such errors it has two additional distinct editing activities against alanine. One activity is designated as 'pretransfer' editing and involves the tRNA(Pro)-independent hydrolysis of activated Ala-AMP. The other activity is designated 'posttransfer' editing and involves deacylation of mischarged Ala-tRNA(Pro). The misacylated Cys-tRNA(Pro) is not edited by ProRS. The chain is Proline--tRNA ligase from Nitrosomonas eutropha (strain DSM 101675 / C91 / Nm57).